A 309-amino-acid chain; its full sequence is Olfactory receptor 1A1 (309 aa).

Residues 1-25 (MRENNQSSTLEFILLGVTGQQEQED) are Extracellular-facing. N-linked (GlcNAc...) asparagine glycosylation is present at N5. The chain crosses the membrane as a helical span at residues 26–49 (FFYILFLFIYPITLIGNLLIVLAI). At 50 to 57 (CSDVHLHN) the chain is on the cytoplasmic side. Residues 58-79 (PMYFLLANLSLVDIFFSSVTIP) form a helical membrane-spanning segment. Over 80–100 (KMLANHLLGSKSISFGGCLTQ) the chain is Extracellular. C97 and C189 form a disulfide bridge. Residues 101-120 (MYFMIALGNTDSYILAAMAY) traverse the membrane as a helical segment. At 121–139 (DRAVAISRPLHYTTIMSPR) the chain is on the cytoplasmic side. The helical transmembrane segment at 140 to 158 (SCIWLIAGSWVIGNANALP) threads the bilayer. The Extracellular portion of the chain corresponds to 159 to 195 (HTLLTASLSFCGNQEVANFYCDITPLLKLSCSDIHFH). Residues 196–218 (VKMMYLGVGIFSVPLLCIIVSYI) form a helical membrane-spanning segment. Residues 219-235 (RVFSTVFQVPSTKGVLK) are Cytoplasmic-facing. The helical transmembrane segment at 236–258 (AFSTCGSHLTVVSLYYGTVMGMY) threads the bilayer. Over 259-270 (FRPLTNYSLKDA) the chain is Extracellular. N264 carries N-linked (GlcNAc...) asparagine glycosylation. Residues 271-290 (VITVMYTAVTPMLNPFIYSL) traverse the membrane as a helical segment. Residues 291 to 309 (RNRDVKAALRKLFNKRISS) lie on the Cytoplasmic side of the membrane.

This sequence belongs to the G-protein coupled receptor 1 family.

The protein localises to the cell membrane. Odorant receptor. This is Olfactory receptor 1A1 (OR1A1) from Pan troglodytes (Chimpanzee).